The sequence spans 609 residues: Sulfite reductase [NADPH] flavoprotein alpha-component (609 aa).

In terms of domain architecture, Flavodoxin-like spans 72–210 (ITLISASQTG…LAAQWRRQLV (139 aa)). FMN is bound by residues 78 to 83 (SQTGNA) and 125 to 128 (STQG). One can recognise an FAD-binding FR-type domain in the interval 244 to 458 (SSPLQATFAV…IEHNDNFRLP (215 aa)). FAD-binding positions include Thr332, Gln366, 396 to 399 (RLYS), 414 to 416 (TVG), Tyr420, and 429 to 432 (GGAS). NADP(+) contacts are provided by residues 529–530 (SR), 535–539 (KIYVQ), and Asp571. Residue Tyr609 coordinates FAD.

The protein belongs to the NADPH-dependent sulphite reductase flavoprotein subunit CysJ family. This sequence in the N-terminal section; belongs to the flavodoxin family. In the C-terminal section; belongs to the flavoprotein pyridine nucleotide cytochrome reductase family. Alpha(8)-beta(8). The alpha component is a flavoprotein, the beta component is a hemoprotein. FAD serves as cofactor. The cofactor is FMN.

It catalyses the reaction hydrogen sulfide + 3 NADP(+) + 3 H2O = sulfite + 3 NADPH + 4 H(+). The protein operates within sulfur metabolism; hydrogen sulfide biosynthesis; hydrogen sulfide from sulfite (NADPH route): step 1/1. Functionally, component of the sulfite reductase complex that catalyzes the 6-electron reduction of sulfite to sulfide. This is one of several activities required for the biosynthesis of L-cysteine from sulfate. The flavoprotein component catalyzes the electron flow from NADPH -&gt; FAD -&gt; FMN to the hemoprotein component. The sequence is that of Sulfite reductase [NADPH] flavoprotein alpha-component from Pectobacterium atrosepticum (strain SCRI 1043 / ATCC BAA-672) (Erwinia carotovora subsp. atroseptica).